Here is a 52-residue protein sequence, read N- to C-terminus: ATP synthase protein 8 (52 aa).

The helical transmembrane segment at 10–30 threads the bilayer; that stretch reads FLMSLMIMMILIFMTINFYFF.

It belongs to the ATPase protein 8 family. F-type ATPases have 2 components, CF(1) - the catalytic core - and CF(0) - the membrane proton channel.

The protein resides in the mitochondrion membrane. Functionally, mitochondrial membrane ATP synthase (F(1)F(0) ATP synthase or Complex V) produces ATP from ADP in the presence of a proton gradient across the membrane which is generated by electron transport complexes of the respiratory chain. F-type ATPases consist of two structural domains, F(1) - containing the extramembraneous catalytic core and F(0) - containing the membrane proton channel, linked together by a central stalk and a peripheral stalk. During catalysis, ATP synthesis in the catalytic domain of F(1) is coupled via a rotary mechanism of the central stalk subunits to proton translocation. Part of the complex F(0) domain. Minor subunit located with subunit a in the membrane. The polypeptide is ATP synthase protein 8 (MT-ATP8) (Rhipicephalus sanguineus (Brown dog tick)).